The primary structure comprises 676 residues: Pre-mRNA-splicing factor CLF1 (676 aa).

16 HAT repeats span residues 46 to 78, 80 to 112, 114 to 146, 148 to 179, 181 to 212, 215 to 255, 257 to 291, 301 to 333, 336 to 369, 379 to 415, 417 to 449, 451 to 483, 485 to 519, 521 to 553, 576 to 614, and 620 to 652; these read EYQGRKRQEYEGALRRNRLNTGQWMRYAQWELE, REFARARSVFERALEVNSTHVPTWIRYIQCELK, KNINHARNLLDRAVTLLPRVDKLWFTYVATEET, GNIAGCRAVFERWMHWRPPVTAWAAYVNMEKR, REFDRARGILRRYVTVHPGAPAWNKWAKFEME, NRDT…FETR, REYERARALYTYGLEKLPKSKSAKLYADYTAFEKQ, VVLTKRRSKYEDQLKEDPADYDTWFSYITLGQE, LEADQIREIFERAVSNVPPHSKRLWRRYIFLWIK, KEVEKAREIYKTCISIIPHKKFTFAKVWLLWAKFEIR, GNLPEARKILGRGLGMSGGKPALYKGYIALEAK, REFDRCRKLYDKYVEKFAEFAAPWMEYAELEQM, GDEERARAIFELAVSQPEMEMPELVWKRFIEFEAE, ENYDRARAIYRQLLDRTHGHIKVWISFAQFEVT, EAKARARSIFGEAWDALKAANKREERVVLFESWREFEEE, and SKADLDKRKPTPVKKKRKLEDGTFEEYIDYVFP. Residues 616–628 show a composition bias toward basic and acidic residues; sequence GDDKSKADLDKRK. Positions 616 to 636 are disordered; it reads GDDKSKADLDKRKPTPVKKKR.

It belongs to the crooked-neck family. As to quaternary structure, associated with the spliceosome.

It is found in the nucleus. Functionally, involved in pre-mRNA splicing and cell cycle progression. Required for the spliceosome assembly and initiation of the DNA replication. This is Pre-mRNA-splicing factor CLF1 (CLF1) from Yarrowia lipolytica (strain CLIB 122 / E 150) (Yeast).